A 466-amino-acid polypeptide reads, in one-letter code: Ribulose bisphosphate carboxylase large chain (466 aa).

Lys-5 bears the N6,N6,N6-trimethyllysine mark. Substrate-binding residues include Asn-114 and Thr-164. Lys-166 functions as the Proton acceptor in the catalytic mechanism. Lys-168 serves as a coordination point for substrate. Lys-192, Asp-194, and Glu-195 together coordinate Mg(2+). The residue at position 192 (Lys-192) is an N6-carboxylysine. The Proton acceptor role is filled by His-285. Positions 286, 318, and 370 each coordinate substrate.

Belongs to the RuBisCO large chain family. Type I subfamily. Heterohexadecamer of 8 large chains and 8 small chains; disulfide-linked. The disulfide link is formed within the large subunit homodimers. It depends on Mg(2+) as a cofactor. Post-translationally, the disulfide bond which can form in the large chain dimeric partners within the hexadecamer appears to be associated with oxidative stress and protein turnover.

The protein resides in the plastid. Its subcellular location is the chloroplast. The enzyme catalyses 2 (2R)-3-phosphoglycerate + 2 H(+) = D-ribulose 1,5-bisphosphate + CO2 + H2O. It carries out the reaction D-ribulose 1,5-bisphosphate + O2 = 2-phosphoglycolate + (2R)-3-phosphoglycerate + 2 H(+). Its function is as follows. RuBisCO catalyzes two reactions: the carboxylation of D-ribulose 1,5-bisphosphate, the primary event in carbon dioxide fixation, as well as the oxidative fragmentation of the pentose substrate in the photorespiration process. Both reactions occur simultaneously and in competition at the same active site. The protein is Ribulose bisphosphate carboxylase large chain of Tropaeolum majus (Common nasturtium).